Here is a 375-residue protein sequence, read N- to C-terminus: Anhydro-N-acetylmuramic acid kinase 1 (375 aa).

20–27 (GTSFDGVD) contacts ATP. Residues 351 to 375 (APSTTGVAAPVGGGRRSKPGARELS) are disordered.

This sequence belongs to the anhydro-N-acetylmuramic acid kinase family.

The enzyme catalyses 1,6-anhydro-N-acetyl-beta-muramate + ATP + H2O = N-acetyl-D-muramate 6-phosphate + ADP + H(+). It functions in the pathway amino-sugar metabolism; 1,6-anhydro-N-acetylmuramate degradation. The protein operates within cell wall biogenesis; peptidoglycan recycling. Its function is as follows. Catalyzes the specific phosphorylation of 1,6-anhydro-N-acetylmuramic acid (anhMurNAc) with the simultaneous cleavage of the 1,6-anhydro ring, generating MurNAc-6-P. Is required for the utilization of anhMurNAc either imported from the medium or derived from its own cell wall murein, and thus plays a role in cell wall recycling. This Jannaschia sp. (strain CCS1) protein is Anhydro-N-acetylmuramic acid kinase 1.